Reading from the N-terminus, the 827-residue chain is Periplasmic nitrate reductase (827 aa).

Residues 1-33 (MNLSRRDFMKANAAMAAATAAGLTIPVKNVVAA) constitute a signal peptide (tat-type signal). Residues 37–93 (IKWDKGVCRFCGTGCAVLVGTKDGRVVASQGDPDAEVNRGLNCIKGYFLPKIMYGKD) form the 4Fe-4S Mo/W bis-MGD-type domain. Residues Cys44, Cys47, Cys51, and Cys79 each contribute to the [4Fe-4S] cluster site. Residues Lys81, Gln148, Asn173, Cys177, 210-217 (WGSNMAEM), 241-245 (STYEH), 260-262 (QTD), Met370, Gln374, Asn480, 506-507 (SD), Lys529, Asp556, and 716-725 (TGRVLEHWHT) contribute to the Mo-bis(molybdopterin guanine dinucleotide) site. Residue Phe792 coordinates substrate. 2 residues coordinate Mo-bis(molybdopterin guanine dinucleotide): Asn800 and Lys817.

The protein belongs to the prokaryotic molybdopterin-containing oxidoreductase family. NasA/NapA/NarB subfamily. As to quaternary structure, component of the periplasmic nitrate reductase NapAB complex composed of NapA and NapB. [4Fe-4S] cluster is required as a cofactor. Mo-bis(molybdopterin guanine dinucleotide) serves as cofactor. In terms of processing, predicted to be exported by the Tat system. The position of the signal peptide cleavage has not been experimentally proven.

It is found in the periplasm. It catalyses the reaction 2 Fe(II)-[cytochrome] + nitrate + 2 H(+) = 2 Fe(III)-[cytochrome] + nitrite + H2O. Catalytic subunit of the periplasmic nitrate reductase complex NapAB. Receives electrons from NapB and catalyzes the reduction of nitrate to nitrite. The polypeptide is Periplasmic nitrate reductase (Haemophilus influenzae (strain PittEE)).